We begin with the raw amino-acid sequence, 445 residues long: Argininosuccinate synthase (445 aa).

Residues 17–25 (AFSGGLDTS) and Ala-43 contribute to the ATP site. Tyr-99 is an L-citrulline binding site. 2 residues coordinate ATP: Gly-129 and Thr-131. Thr-131, Asn-135, and Asp-136 together coordinate L-aspartate. Asn-135 serves as a coordination point for L-citrulline. An ATP-binding site is contributed by Asp-136. L-citrulline contacts are provided by Arg-139 and Ser-192. Asp-194 contacts ATP. Positions 201, 203, and 280 each coordinate L-citrulline.

Belongs to the argininosuccinate synthase family. Type 2 subfamily. As to quaternary structure, homotetramer.

Its subcellular location is the cytoplasm. It carries out the reaction L-citrulline + L-aspartate + ATP = 2-(N(omega)-L-arginino)succinate + AMP + diphosphate + H(+). It participates in amino-acid biosynthesis; L-arginine biosynthesis; L-arginine from L-ornithine and carbamoyl phosphate: step 2/3. The polypeptide is Argininosuccinate synthase (Burkholderia ambifaria (strain ATCC BAA-244 / DSM 16087 / CCUG 44356 / LMG 19182 / AMMD) (Burkholderia cepacia (strain AMMD))).